Here is a 366-residue protein sequence, read N- to C-terminus: Beta sliding clamp (366 aa).

The protein belongs to the beta sliding clamp family. In terms of assembly, forms a ring-shaped head-to-tail homodimer around DNA which binds and tethers DNA polymerases and other proteins to the DNA. The DNA replisome complex has a single clamp-loading complex (3 tau and 1 each of delta, delta', psi and chi subunits) which binds 3 Pol III cores (1 core on the leading strand and 2 on the lagging strand) each with a beta sliding clamp dimer. Additional proteins in the replisome are other copies of gamma, psi and chi, Ssb, DNA helicase and RNA primase.

The protein resides in the cytoplasm. In terms of biological role, confers DNA tethering and processivity to DNA polymerases and other proteins. Acts as a clamp, forming a ring around DNA (a reaction catalyzed by the clamp-loading complex) which diffuses in an ATP-independent manner freely and bidirectionally along dsDNA. Initially characterized for its ability to contact the catalytic subunit of DNA polymerase III (Pol III), a complex, multichain enzyme responsible for most of the replicative synthesis in bacteria; Pol III exhibits 3'-5' exonuclease proofreading activity. The beta chain is required for initiation of replication as well as for processivity of DNA replication. This Vibrio cholerae serotype O1 (strain ATCC 39315 / El Tor Inaba N16961) protein is Beta sliding clamp (dnaN).